The following is a 153-amino-acid chain: Transcriptional repressor NrdR (153 aa).

The segment at 3 to 34 (CPFCGHLEDRVIDSRAGGAGEVIRRRRECASC) is a zinc-finger region. Positions 49-139 (PTVVKKDGRR…VYRSFRDIDQ (91 aa)) constitute an ATP-cone domain.

The protein belongs to the NrdR family. It depends on Zn(2+) as a cofactor.

Its function is as follows. Negatively regulates transcription of bacterial ribonucleotide reductase nrd genes and operons by binding to NrdR-boxes. The polypeptide is Transcriptional repressor NrdR (Sorangium cellulosum (strain So ce56) (Polyangium cellulosum (strain So ce56))).